Consider the following 852-residue polypeptide: Protein Shroom1 (852 aa).

M1 carries the post-translational modification N-acetylmethionine. S18 carries the phosphoserine modification. Disordered stretches follow at residues 34-54 (SSFS…GTDL), 81-109 (TSPR…PLNR), and 125-218 (AAQA…ANQQ). T103 is subject to Phosphothreonine. Low complexity predominate over residues 125-144 (AAQAAEPPSPPASRAAYRQR). Phosphoserine occurs at positions 133 and 137. Residues 145–233 (LQGAQRRVLR…SEPGKLDRVG (89 aa)) form the ASD1 domain. Residues 152–164 (VLRETSFQRKELR) are compositionally biased toward basic and acidic residues. 3 positions are modified to phosphoserine: S166, S190, and S224. Disordered stretches follow at residues 276–320 (LPET…GSGG), 399–431 (MRSP…QRTG), 464–496 (SRPT…TAAE), and 823–852 (DLGH…LLLT). A compositionally biased stretch (polar residues) spans 279 to 289 (TQPQGSMNLDS). Low complexity predominate over residues 301-313 (ASRSRSASGEVLG). Positions 465-479 (RPTSHTPTGTANDNI) are enriched in polar residues. The ASD2 domain occupies 543–825 (EELVQELARL…QLDAIRDDLG (283 aa)). A compositionally biased stretch (pro residues) spans 830 to 852 (SPSPARPPGTCPPVQPPFPLLLT).

It belongs to the shroom family. In terms of assembly, interacts with F-actin.

It localises to the cytoplasm. It is found in the cytoskeleton. May be involved in the assembly of microtubule arrays during cell elongation. The chain is Protein Shroom1 (SHROOM1) from Homo sapiens (Human).